Consider the following 691-residue polypeptide: Protein phosphatase 1 regulatory subunit 37 (691 aa).

The tract at residues 1–43 (MEIAPQEAPPVPGADGDIEEAPAEAGSPSPASPPADGRLKAAA) is disordered. 2 positions are modified to phosphoserine: Ser50 and Ser56. LRR repeat units follow at residues 220-240 (SLAVLHLENASLSGRPLMLLA), 248-269 (NLRELYLADNKLNGLQDSAQLG), 277-297 (SLQILDLRNNHVLDSGLAYIC), 306-326 (GLVTLVLWNNQLTHTGMAFLG), and 334-354 (SLETLNLGHNPIGNEGVRHLK). The tract at residues 460–662 (EREEKEQPPQ…PEVKGGSCGL (203 aa)) is disordered. Residues 468–481 (PQLSASMPETTATE) show a composition bias toward polar residues. A compositionally biased stretch (acidic residues) spans 505-523 (SDSDSDSDGEEEEEEEGER). Ser561 is subject to Phosphoserine. Pro residues-rich tracts occupy residues 584-605 (PASPTPPSPPPPPSPPASPSLP) and 620-634 (PQPPPEPPRSGPPLP).

It belongs to the PPP1R37 family. In terms of assembly, interacts with PPP1CA.

In terms of biological role, inhibits phosphatase activity of protein phosphatase 1 (PP1) complexes. The chain is Protein phosphatase 1 regulatory subunit 37 (PPP1R37) from Homo sapiens (Human).